Reading from the N-terminus, the 742-residue chain is Phosphoribosylformylglycinamidine synthase subunit PurL (742 aa).

Residue H54 is part of the active site. ATP is bound by residues Y57 and K96. E98 lines the Mg(2+) pocket. Residues 99–102 and R121 contribute to the substrate site; that span reads SHNH. The Proton acceptor role is filled by H100. Mg(2+) is bound at residue D122. Q245 is a binding site for substrate. D273 is a binding site for Mg(2+). 317–319 lines the substrate pocket; sequence ESQ. ATP contacts are provided by D500 and G537. Residue N538 coordinates Mg(2+). Residue S540 participates in substrate binding.

Belongs to the FGAMS family. As to quaternary structure, monomer. Part of the FGAM synthase complex composed of 1 PurL, 1 PurQ and 2 PurS subunits.

It is found in the cytoplasm. It carries out the reaction N(2)-formyl-N(1)-(5-phospho-beta-D-ribosyl)glycinamide + L-glutamine + ATP + H2O = 2-formamido-N(1)-(5-O-phospho-beta-D-ribosyl)acetamidine + L-glutamate + ADP + phosphate + H(+). Its pathway is purine metabolism; IMP biosynthesis via de novo pathway; 5-amino-1-(5-phospho-D-ribosyl)imidazole from N(2)-formyl-N(1)-(5-phospho-D-ribosyl)glycinamide: step 1/2. In terms of biological role, part of the phosphoribosylformylglycinamidine synthase complex involved in the purines biosynthetic pathway. Catalyzes the ATP-dependent conversion of formylglycinamide ribonucleotide (FGAR) and glutamine to yield formylglycinamidine ribonucleotide (FGAM) and glutamate. The FGAM synthase complex is composed of three subunits. PurQ produces an ammonia molecule by converting glutamine to glutamate. PurL transfers the ammonia molecule to FGAR to form FGAM in an ATP-dependent manner. PurS interacts with PurQ and PurL and is thought to assist in the transfer of the ammonia molecule from PurQ to PurL. The sequence is that of Phosphoribosylformylglycinamidine synthase subunit PurL from Bacillus velezensis (strain DSM 23117 / BGSC 10A6 / LMG 26770 / FZB42) (Bacillus amyloliquefaciens subsp. plantarum).